Consider the following 407-residue polypeptide: V-set and immunoglobulin domain-containing protein 1 (407 aa).

Positions 1 to 22 (MMVFAFWKVFLILNCLAGQVSM) are cleaved as a signal peptide. Residues 23–134 (VQVTIPDTFV…HFVGKNQGLL (112 aa)) enclose the Ig-like V-type domain. The Extracellular portion of the chain corresponds to 23 to 234 (VQVTIPDTFV…EIDLTSSHPE (212 aa)). A glycan (N-linked (GlcNAc...) asparagine) is linked at Asn-39. Intrachain disulfides connect Cys-44-Cys-118 and Cys-163-Cys-213. An Ig-like C2-type domain is found at 145-229 (PFCTIQGRPE…GNSSCEIDLT (85 aa)). 2 N-linked (GlcNAc...) asparagine glycosylation sites follow: Asn-202 and Asn-221. Residues 235 to 255 (VGIIIGALVGALIGAAVIICV) form a helical membrane-spanning segment. Topologically, residues 256–407 (VYFARNKVKS…SKAGEDTVKA (152 aa)) are cytoplasmic. Disordered stretches follow at residues 268–289 (QKNL…PQQS) and 318–407 (TAVL…TVKA). A phosphoserine mark is found at Ser-273 and Ser-274. Residues 361 to 371 (DPETETEPEPE) are compositionally biased toward acidic residues.

It is found in the membrane. The chain is V-set and immunoglobulin domain-containing protein 1 (Vsig1) from Mus musculus (Mouse).